Consider the following 61-residue polypeptide: Small ribosomal subunit protein uS14 (61 aa).

Zn(2+) contacts are provided by Cys-24, Cys-27, Cys-40, and Cys-43.

It belongs to the universal ribosomal protein uS14 family. Zinc-binding uS14 subfamily. In terms of assembly, part of the 30S ribosomal subunit. Contacts proteins S3 and S10. Requires Zn(2+) as cofactor.

Functionally, binds 16S rRNA, required for the assembly of 30S particles and may also be responsible for determining the conformation of the 16S rRNA at the A site. This Desulfosudis oleivorans (strain DSM 6200 / JCM 39069 / Hxd3) (Desulfococcus oleovorans) protein is Small ribosomal subunit protein uS14.